Consider the following 360-residue polypeptide: Putative F-box protein At5g55150 (360 aa).

Positions 6–54 (SSWSEFLPELLNTVFHNLNDARDILNCATVCSSWKDSSSAVYYSRTFSP) constitute an F-box domain.

This is Putative F-box protein At5g55150 from Arabidopsis thaliana (Mouse-ear cress).